A 1792-amino-acid polypeptide reads, in one-letter code: Eukaryotic translation initiation factor 4G (1792 aa).

Residues Met-1–Ala-12 show a composition bias toward basic and acidic residues. 11 disordered regions span residues Met-1–Pro-285, Asp-424–Ser-446, Ser-491–Val-590, Asn-612–Lys-659, Gly-678–His-761, Val-874–Arg-912, Ser-960–Trp-993, Met-999–Gly-1018, Gly-1275–Glu-1299, Trp-1407–Thr-1503, and Glu-1537–Ser-1600. Positions Phe-21–Ser-42 are enriched in gly residues. Positions Pro-88–Arg-107 are enriched in pro residues. 2 stretches are compositionally biased toward polar residues: residues Arg-147–Gly-156 and Ser-179–Pro-191. 3 stretches are compositionally biased toward low complexity: residues Pro-216–Gln-243, Pro-263–Asn-278, and Pro-432–Ser-442. Residues Ser-491 to Thr-517 are compositionally biased toward polar residues. Composition is skewed to basic and acidic residues over residues Asp-545 to Glu-564, Lys-571 to Pro-587, and Asp-633 to Arg-643. A compositionally biased stretch (polar residues) spans Asn-644–Ser-654. The segment covering Ala-699–Glu-718 has biased composition (low complexity). Over residues Ala-964–Leu-990 the composition is skewed to basic and acidic residues. An EIF4E-binding region spans residues Gly-1018–Leu-1030. The region spanning Gln-1183–Lys-1406 is the MIF4G domain. Positions Glu-1278 to Gly-1289 are enriched in acidic residues. Composition is skewed to basic and acidic residues over residues Glu-1290–Glu-1299 and Arg-1411–Ala-1432. 2 stretches are compositionally biased toward low complexity: residues Arg-1439–Gly-1450 and Ser-1461–Ser-1470. 2 stretches are compositionally biased toward basic and acidic residues: residues Ile-1490–Thr-1503 and Ala-1559–Gly-1572. Polar residues predominate over residues Pro-1576–Arg-1593. An MI domain is found at Asp-1603–Glu-1727.

Belongs to the eukaryotic initiation factor 4G family. EIF4F is a multi-subunit complex, the composition of which varies with external and internal environmental conditions. It is composed of at least EIF4A, EIF4E and EIF4G. In higher plants two isoforms of EIF4F have been identified, named isoform EIF4F and isoform EIF(iso)4F. Isoform EIF4F has subunits p220 and p26, whereas isoform EIF(iso)4F has subunits p82 and p28.

Component of the protein complex eIF4F, which is involved in the recognition of the mRNA cap, ATP-dependent unwinding of 5'-terminal secondary structure and recruitment of mRNA to the ribosome. This Oryza sativa subsp. japonica (Rice) protein is Eukaryotic translation initiation factor 4G.